The following is a 624-amino-acid chain: Protein FAM234B (624 aa).

The interval 1-91 (MATVLSRALK…GFPSEPLGGL (91 aa)) is disordered. At S16 the chain carries Phosphoserine. T26 is subject to Phosphothreonine. S30, S33, and S63 each carry phosphoserine. Residues 107–127 (VFLLTLVISMVLVLLCAFLIP) form a helical membrane-spanning segment.

Belongs to the FAM234 family.

The protein localises to the membrane. The protein resides in the golgi outpost. Its subcellular location is the cytoplasm. It localises to the cytoskeleton. It is found in the microtubule organizing center. The protein is Protein FAM234B of Mus musculus (Mouse).